Here is a 343-residue protein sequence, read N- to C-terminus: Flap endonuclease 1 (343 aa).

The N-domain stretch occupies residues 1–98; sequence MGVPIGDLVP…KELEKRREAR (98 aa). Mg(2+) contacts are provided by Asp-27, Asp-80, Glu-152, Glu-154, Asp-173, Asp-175, and Asp-236. The I-domain stretch occupies residues 116–258; the sequence is EARKYAQRAT…KALEIVRYSR (143 aa). Residues 330–338 are interaction with PCNA; it reads RQSTLESWF.

Belongs to the XPG/RAD2 endonuclease family. FEN1 subfamily. As to quaternary structure, interacts with PCNA. PCNA stimulates the nuclease activity without altering cleavage specificity. It depends on Mg(2+) as a cofactor.

Structure-specific nuclease with 5'-flap endonuclease and 5'-3' exonuclease activities involved in DNA replication and repair. During DNA replication, cleaves the 5'-overhanging flap structure that is generated by displacement synthesis when DNA polymerase encounters the 5'-end of a downstream Okazaki fragment. Binds the unpaired 3'-DNA end and kinks the DNA to facilitate 5' cleavage specificity. Cleaves one nucleotide into the double-stranded DNA from the junction in flap DNA, leaving a nick for ligation. Also involved in the base excision repair (BER) pathway. Acts as a genome stabilization factor that prevents flaps from equilibrating into structures that lead to duplications and deletions. Also possesses 5'-3' exonuclease activity on nicked or gapped double-stranded DNA. In Pyrococcus horikoshii (strain ATCC 700860 / DSM 12428 / JCM 9974 / NBRC 100139 / OT-3), this protein is Flap endonuclease 1.